Reading from the N-terminus, the 249-residue chain is Undecaprenyl-diphosphatase (249 aa).

8 consecutive transmembrane segments (helical) span residues 11 to 31 (GLTE…TAIF), 35 to 55 (PDVG…LIFV), 80 to 100 (LVLS…FIES), 101 to 121 (VFSS…LMLL), 135 to 155 (IPYL…LPGI), 175 to 195 (AVKY…ILEL), 202 to 222 (AEQL…LYLV), and 226 to 246 (VIGG…FFVL).

This sequence belongs to the UppP family.

It is found in the cell membrane. The catalysed reaction is di-trans,octa-cis-undecaprenyl diphosphate + H2O = di-trans,octa-cis-undecaprenyl phosphate + phosphate + H(+). Functionally, catalyzes the dephosphorylation of undecaprenyl diphosphate (UPP). The chain is Undecaprenyl-diphosphatase from Methanococcus maripaludis (strain C5 / ATCC BAA-1333).